The sequence spans 199 residues: HTH-type transcriptional repressor NemR (199 aa).

The region spanning 7-67 (HDTREHLLAT…AMLERHYAAY (61 aa)) is the HTH tetR-type domain. Residues 30-49 (GLSELLKTAEVPKGSFYHYF) constitute a DNA-binding region (H-T-H motif).

Functionally, involved in response to both electrophiles and reactive chlorine species (RCS). Represses the transcription of the nemRA-gloA operon by binding to the NemR box. The chain is HTH-type transcriptional repressor NemR (nemR) from Escherichia coli O6:H1 (strain CFT073 / ATCC 700928 / UPEC).